Consider the following 543-residue polypeptide: Bifunctional purine biosynthesis protein PurH (543 aa).

An MGS-like domain is found at 5–151; the sequence is NHARPIRRAL…KNHKDVTIVV (147 aa).

It belongs to the PurH family.

It carries out the reaction (6R)-10-formyltetrahydrofolate + 5-amino-1-(5-phospho-beta-D-ribosyl)imidazole-4-carboxamide = 5-formamido-1-(5-phospho-D-ribosyl)imidazole-4-carboxamide + (6S)-5,6,7,8-tetrahydrofolate. It catalyses the reaction IMP + H2O = 5-formamido-1-(5-phospho-D-ribosyl)imidazole-4-carboxamide. Its pathway is purine metabolism; IMP biosynthesis via de novo pathway; 5-formamido-1-(5-phospho-D-ribosyl)imidazole-4-carboxamide from 5-amino-1-(5-phospho-D-ribosyl)imidazole-4-carboxamide (10-formyl THF route): step 1/1. It functions in the pathway purine metabolism; IMP biosynthesis via de novo pathway; IMP from 5-formamido-1-(5-phospho-D-ribosyl)imidazole-4-carboxamide: step 1/1. This chain is Bifunctional purine biosynthesis protein PurH, found in Shewanella oneidensis (strain ATCC 700550 / JCM 31522 / CIP 106686 / LMG 19005 / NCIMB 14063 / MR-1).